The sequence spans 124 residues: Protein YobA (124 aa).

The N-terminal stretch at 1–26 (MASTARSLRYALAILTTSLVTPSVWA) is a signal peptide. Cu cation-binding residues include His27 and His113.

Belongs to the CopC family.

It localises to the periplasm. The polypeptide is Protein YobA (yobA) (Escherichia coli O6:H1 (strain CFT073 / ATCC 700928 / UPEC)).